The following is a 189-amino-acid chain: Casparian strip membrane protein 1 (189 aa).

At 1–42 (MEKNESSAIEIAESSKERKGKAPLLAAAVGHDRAAGYKRGVS) the chain is on the cytoplasmic side. The helical transmembrane segment at 43 to 63 (IFDLILRISAATAALAATIVM) threads the bilayer. At 64–90 (GTTEQTLPFFTQFFQFRAQYDDLPTFT) the chain is on the extracellular side. The helical transmembrane segment at 91-111 (FFVVGMAIVTGYLILSVPLSI) threads the bilayer. The Cytoplasmic portion of the chain corresponds to 112–130 (VCIARPVAIGPRFLLIVCD). Residues 131 to 151 (TVTAVLATSAAGSSAAIVYLA) form a helical membrane-spanning segment. Over 152–189 (HNGNSDANWLAICQQFNDFCQRVSGAVVAAFVAVVCSS) the chain is Extracellular.

Belongs to the Casparian strip membrane proteins (CASP) family. As to quaternary structure, homodimer and heterodimers.

The protein localises to the cell membrane. Regulates membrane-cell wall junctions and localized cell wall deposition. Required for establishment of the Casparian strip membrane domain (CSD) and the subsequent formation of Casparian strips, a cell wall modification of the root endodermis that determines an apoplastic barrier between the intraorganismal apoplasm and the extraorganismal apoplasm and prevents lateral diffusion. The chain is Casparian strip membrane protein 1 from Striga asiatica (Asiatic witchweed).